A 345-amino-acid polypeptide reads, in one-letter code: Phosphoribosylformylglycinamidine cyclo-ligase (345 aa).

Belongs to the AIR synthase family.

The protein localises to the cytoplasm. The enzyme catalyses 2-formamido-N(1)-(5-O-phospho-beta-D-ribosyl)acetamidine + ATP = 5-amino-1-(5-phospho-beta-D-ribosyl)imidazole + ADP + phosphate + H(+). Its pathway is purine metabolism; IMP biosynthesis via de novo pathway; 5-amino-1-(5-phospho-D-ribosyl)imidazole from N(2)-formyl-N(1)-(5-phospho-D-ribosyl)glycinamide: step 2/2. The protein is Phosphoribosylformylglycinamidine cyclo-ligase of Pseudoalteromonas atlantica (strain T6c / ATCC BAA-1087).